The chain runs to 209 residues: Mitochondrial import inner membrane translocase subunit Tim23 (209 aa).

Transmembrane regions (helical) follow at residues 73–93 (FELA…FGAM), 125–145 (ALWA…GVII), and 181–197 (GLTG…YNNW).

This sequence belongs to the Tim17/Tim22/Tim23 family. In terms of assembly, component of the TIM23 complex at least composed of TIMM23, TIMM17 (TIMM17A or TIMM17B) and TIMM50; within this complex, directly interacts with TIMM50. The complex interacts with the TIMM44 component of the PAM complex and with DNAJC15. Upon mitochondrial depolarization, interacts with PINK1; the interaction is required for PINK1 accumulation at the outer mitochondrial membrane, kinase activation by autophosphorylation and PRKN recruitement to mitochondria.

The protein localises to the mitochondrion inner membrane. Essential component of the TIM23 complex, a complex that mediates the translocation of transit peptide-containing proteins across the mitochondrial inner membrane. Has a role in the activation of stress-induced mitophagy by protecting PINK1 from OMA1-mediated degradation and facilitating its accumulation at the outer mitochondrial membrane in response to depolarization. The protein is Mitochondrial import inner membrane translocase subunit Tim23 (TIMM23) of Homo sapiens (Human).